We begin with the raw amino-acid sequence, 576 residues long: Aspartate--tRNA ligase (576 aa).

Glu173 provides a ligand contact to L-aspartate. The aspartate stretch occupies residues 197 to 200; that stretch reads QLFK. Arg219 lines the L-aspartate pocket. ATP is bound by residues 219–221 and Gln228; that span reads RDE. Residue His438 coordinates L-aspartate. Glu470 is an ATP binding site. Position 477 (Arg477) interacts with L-aspartate. ATP is bound at residue 522–525; sequence GLDR.

This sequence belongs to the class-II aminoacyl-tRNA synthetase family. Type 1 subfamily. Homodimer.

It is found in the cytoplasm. It carries out the reaction tRNA(Asp) + L-aspartate + ATP = L-aspartyl-tRNA(Asp) + AMP + diphosphate. In terms of biological role, catalyzes the attachment of L-aspartate to tRNA(Asp) in a two-step reaction: L-aspartate is first activated by ATP to form Asp-AMP and then transferred to the acceptor end of tRNA(Asp). The sequence is that of Aspartate--tRNA ligase from Aster yellows witches'-broom phytoplasma (strain AYWB).